Here is a 429-residue protein sequence, read N- to C-terminus: Glutamate-1-semialdehyde 2,1-aminomutase 2 (429 aa).

An N6-(pyridoxal phosphate)lysine modification is found at Lys268.

Belongs to the class-III pyridoxal-phosphate-dependent aminotransferase family. HemL subfamily. Homodimer. The cofactor is pyridoxal 5'-phosphate.

Its subcellular location is the cytoplasm. It carries out the reaction (S)-4-amino-5-oxopentanoate = 5-aminolevulinate. The protein operates within porphyrin-containing compound metabolism; protoporphyrin-IX biosynthesis; 5-aminolevulinate from L-glutamyl-tRNA(Glu): step 2/2. This chain is Glutamate-1-semialdehyde 2,1-aminomutase 2, found in Geobacillus thermodenitrificans (strain NG80-2).